A 755-amino-acid polypeptide reads, in one-letter code: Tryptophan 2-monooxygenase (755 aa).

Residues serine 247, glutamate 267, lysine 275, and arginine 295 each coordinate FMN. Residue arginine 295 coordinates substrate.

The protein belongs to the tryptophan 2-monooxygenase family. It depends on FMN as a cofactor.

It carries out the reaction L-tryptophan + O2 = indole-3-acetamide + CO2 + H2O. It functions in the pathway plant hormone metabolism; auxin biosynthesis. This chain is Tryptophan 2-monooxygenase (tms1), found in Agrobacterium tumefaciens (strain Ach5).